The sequence spans 364 residues: Peptide chain release factor 1 (364 aa).

At Gln237 the chain carries N5-methylglutamine.

Belongs to the prokaryotic/mitochondrial release factor family. Methylated by PrmC. Methylation increases the termination efficiency of RF1.

The protein resides in the cytoplasm. Peptide chain release factor 1 directs the termination of translation in response to the peptide chain termination codons UAG and UAA. The protein is Peptide chain release factor 1 of Mycoplasma mycoides subsp. mycoides SC (strain CCUG 32753 / NCTC 10114 / PG1).